The sequence spans 121 residues: Basic phospholipase A2 homolog (121 aa).

7 disulfide bridges follow: Cys-26/Cys-115, Cys-28/Cys-44, Cys-43/Cys-95, Cys-49/Cys-121, Cys-50/Cys-88, Cys-57/Cys-81, and Cys-75/Cys-86.

Belongs to the phospholipase A2 family. Group II subfamily. K49 sub-subfamily. In terms of assembly, homodimer. Expressed by the venom gland.

Its subcellular location is the secreted. Snake venom phospholipase A2 homolog that lacks enzymatic activity, but has myotoxic and cytolytic activities. This Metlapilcoatlus nummifer (Mexican jumping pitviper) protein is Basic phospholipase A2 homolog.